A 444-amino-acid chain; its full sequence is Ribosomal protein uS12 methylthiotransferase RimO (444 aa).

One can recognise an MTTase N-terminal domain in the interval 4–118 (YKIGLISLGC…IQNYIDDFFN (115 aa)). 6 residues coordinate [4Fe-4S] cluster: Cys13, Cys48, Cys81, Cys155, Cys159, and Cys162. Residues 141 to 371 (TTAKHMAYIR…MSIQQNVSSK (231 aa)) form the Radical SAM core domain. The TRAM domain occupies 374–440 (KNKLEKVYKV…EYDLIGVVCD (67 aa)).

Belongs to the methylthiotransferase family. RimO subfamily. The cofactor is [4Fe-4S] cluster.

It is found in the cytoplasm. The enzyme catalyses L-aspartate(89)-[ribosomal protein uS12]-hydrogen + (sulfur carrier)-SH + AH2 + 2 S-adenosyl-L-methionine = 3-methylsulfanyl-L-aspartate(89)-[ribosomal protein uS12]-hydrogen + (sulfur carrier)-H + 5'-deoxyadenosine + L-methionine + A + S-adenosyl-L-homocysteine + 2 H(+). Functionally, catalyzes the methylthiolation of an aspartic acid residue of ribosomal protein uS12. The protein is Ribosomal protein uS12 methylthiotransferase RimO of Clostridium novyi (strain NT).